The chain runs to 334 residues: O(6)-methylguanine-induced apoptosis 2 (334 aa).

The segment at 1 to 60 (MDNSAQKNERTGKHPRRASEVQKGFTAAYPTQSSIPFKSQASVIPESEKKGFNSQAKRFP) is disordered. Over residues 7-20 (KNERTGKHPRRASE) the composition is skewed to basic and acidic residues. Residues 29–42 (YPTQSSIPFKSQAS) show a composition bias toward polar residues. 7 STPGR repeats span residues 67-74 (PGPGFYNV), 109-117 (PAANAYTIP), 148-155 (PAPNYYNA), 187-206 (GPPPGHYDINESLVKQSPNT), 225-257 (GPGPGYYNPSDCTKVPKKTLFPKNPILNFSAQP), 267-282 (PGPGQYEIVDYLGPRK), and 306-316 (LPGPATYKPEL). The residue at position 72 (tyrosine 72) is a Phosphotyrosine.

Belongs to the STPG1 family.

Its subcellular location is the cytoplasm. It localises to the nucleus. Its function is as follows. May positively contribute to the induction of apoptosis triggered by O(6)-methylguanine. This is O(6)-methylguanine-induced apoptosis 2 (STPG1) from Homo sapiens (Human).